We begin with the raw amino-acid sequence, 468 residues long: 6-phospho-beta-galactosidase (468 aa).

Gln19, His116, Asn159, Glu160, and Asn297 together coordinate D-galactose 6-phosphate. Catalysis depends on Glu160, which acts as the Proton donor. Residue Glu375 is the Nucleophile of the active site. The D-galactose 6-phosphate site is built by Ser428, Trp429, Lys435, and Tyr437.

It belongs to the glycosyl hydrolase 1 family.

It catalyses the reaction a 6-phospho-beta-D-galactoside + H2O = D-galactose 6-phosphate + an alcohol. It participates in carbohydrate metabolism; lactose degradation; D-galactose 6-phosphate and beta-D-glucose from lactose 6-phosphate: step 1/1. In Streptococcus agalactiae serotype III (strain NEM316), this protein is 6-phospho-beta-galactosidase.